A 493-amino-acid chain; its full sequence is Cytochrome P450 monooxygenase olcG (493 aa).

The helical transmembrane segment at 15–35 (GILATGALVIFVALFLATFQF) threads the bilayer. Position 429 (Cys-429) interacts with heme.

This sequence belongs to the cytochrome P450 family. Heme is required as a cofactor.

It is found in the membrane. It functions in the pathway secondary metabolite biosynthesis; terpenoid biosynthesis. Functionally, cytochrome P450 monooxygenase; part of the gene cluster that mediates the biosynthesis of 15-deoxyoxalicine B. The first step of the pathway is the synthesis of nicotinyl-CoA from nicotinic acid by the nicotinic acid-CoA ligase olcI. Nicotinyl-CoA is then a substrate of polyketide synthase olcA to produce 4-hydroxy-6-(3-pyridinyl)-2H-pyran-2-one (HPPO) which is further prenylated by the polyprenyl transferase olcH to yield geranylgeranyl-HPPO. Geranylgeranyl pyrophosphate is provided by the cluster-specific geranylgeranyl pyrophosphate synthase olcC. The FAD-dependent monooxygenase olcE catalyzes the epoxidation of geranylgeranyl-HPPO and the terpene cyclase olcD catalyzes the cyclization of the terpenoid component, resulting in the formation of the tricyclic terpene moiety seen in predecaturin E. The cytochrome P450 monooxygenase then catalyzes the allylic oxidation of predecaturin E, which is followed by spirocylization with concomitant loss of one molecule of water to form decaturin E. Decaturin E is the substrate of the cytochrome P450 monooxygenase olcJ which hydroxylates it at the C-29 position to form decaturin F. The short-chain dehydrogenase/reductase olcF may catalyze the oxidation of decaturin F to generate the 29-hydroxyl-27-one intermediate, and subsequent hemiacetal formation probably leads to the formation of decaturin C. The dioxygenase olcK may be a peroxisomal enzyme that catalyzes the hydroxylation of decaturin C into decaturin A once decaturin C is shuttled into the peroxisome by the MFS transporter olcL. Finally the cytochrome P450 monooxygenase olcB catalyzes the oxidative rearrangement to yield 15-deoxyoxalicine B. In the absence of olcJ, decaturin E may be shunted to a pathway in which it is oxidized to a ketone, possibly by olcF, to form decaturin D, which undergoes further allylic oxidation to yield decaturin G. Moreover, in the absence of oclK or oclL, oclB can convert decaturin C into 15-deoxyoxalicine A. In Penicillium canescens, this protein is Cytochrome P450 monooxygenase olcG.